The following is a 377-amino-acid chain: Alanine racemase (377 aa).

K37 (proton acceptor; specific for D-alanine) is an active-site residue. At K37 the chain carries N6-(pyridoxal phosphate)lysine. R135 is a substrate binding site. Y271 acts as the Proton acceptor; specific for L-alanine in catalysis. M319 lines the substrate pocket.

It belongs to the alanine racemase family. It depends on pyridoxal 5'-phosphate as a cofactor.

The catalysed reaction is L-alanine = D-alanine. The protein operates within amino-acid biosynthesis; D-alanine biosynthesis; D-alanine from L-alanine: step 1/1. Its function is as follows. Catalyzes the interconversion of L-alanine and D-alanine. May also act on other amino acids. In Helicobacter pylori (strain J99 / ATCC 700824) (Campylobacter pylori J99), this protein is Alanine racemase (alr).